Here is a 259-residue protein sequence, read N- to C-terminus: FAD-linked sulfhydryl oxidase (259 aa).

This sequence belongs to the baculoviridae p33 family. In terms of assembly, homodimer.

The protein localises to the host cytoplasm. Its subcellular location is the host nucleus. It catalyses the reaction 2 R'C(R)SH + O2 = R'C(R)S-S(R)CR' + H2O2. In terms of biological role, functional FAD-linked sulfhydryl oxidase that is required for infectious budded virion (BV) production and for the formation of enveloped occluded virion (ODV). The polypeptide is FAD-linked sulfhydryl oxidase (P33) (Lepidoptera (butterflies and moths)).